The sequence spans 290 residues: Appressoria-specific virulence factor GAS2 (290 aa).

An N-terminal signal peptide occupies residues 1–19; that stretch reads MKYTSAILISAFAATNVFA. N99 carries an N-linked (GlcNAc...) asparagine glycan. Residues 121–140 are disordered; that stretch reads LPRAGGGTSTPKGTEETGVK.

It localises to the cytoplasm. In terms of biological role, appressoria-specific virulence factor required for appressorial penetration in host and lesion development. This is Appressoria-specific virulence factor GAS2 from Pyricularia oryzae (strain 70-15 / ATCC MYA-4617 / FGSC 8958) (Rice blast fungus).